A 241-amino-acid chain; its full sequence is Phosphoribosylaminoimidazole-succinocarboxamide synthase (241 aa).

Belongs to the SAICAR synthetase family.

The catalysed reaction is 5-amino-1-(5-phospho-D-ribosyl)imidazole-4-carboxylate + L-aspartate + ATP = (2S)-2-[5-amino-1-(5-phospho-beta-D-ribosyl)imidazole-4-carboxamido]succinate + ADP + phosphate + 2 H(+). It functions in the pathway purine metabolism; IMP biosynthesis via de novo pathway; 5-amino-1-(5-phospho-D-ribosyl)imidazole-4-carboxamide from 5-amino-1-(5-phospho-D-ribosyl)imidazole-4-carboxylate: step 1/2. The protein is Phosphoribosylaminoimidazole-succinocarboxamide synthase of Oenococcus oeni (strain ATCC BAA-331 / PSU-1).